Consider the following 1141-residue polypeptide: Envelopment polyprotein (1141 aa).

Residues 1–19 (MFCLCLSLLGLLLCWPAAT) form the signal peptide. Topologically, residues 20 to 489 (RNLLELKVEC…CVPGLHGWAT (470 aa)) are lumenal. 6 disulfides stabilise this stretch: cysteine 29/cysteine 154, cysteine 63/cysteine 160, cysteine 112/cysteine 131, cysteine 136/cysteine 141, cysteine 178/cysteine 188, and cysteine 213/cysteine 252. Asparagine 137 carries N-linked (GlcNAc...) asparagine; by host glycosylation. Asparagine 352 carries an N-linked (GlcNAc...) asparagine; by host glycan. Intrachain disulfides connect cysteine 381/cysteine 440, cysteine 385/cysteine 394, cysteine 410/cysteine 429, and cysteine 457/cysteine 480. Asparagine 404 is a glycosylation site (N-linked (GlcNAc...) asparagine; by host). Residues 490–510 (ISLLITFCFGWLAIPLLSMII) form a helical membrane-spanning segment. Residues 511–632 (IRFLLIFTYL…LSMFRYKSKC (122 aa)) lie on the Cytoplasmic side of the membrane. A binding to the ribonucleoprotein region spans residues 521-538 (CSKYSTDSKFKLIIEKVK). CCHC-type zinc fingers lie at residues 550 to 570 (CEVCQQGCETAKELESHKKSC) and 575 to 596 (CPYCLNPTEATESALQAHFKVC). 3 binding to the ribonucleoprotein regions span residues 593-610 (FKVCKLTTRFQENLKKSL), 597-608 (KLTTRFQENLKK), and 616-630 (KRGLYRTLSMFRYKS). The segment at 612–653 (TYEPKRGLYRTLSMFRYKSKCYVGLVWCILLTMELIVWAASA) is inhibition of interferon induction. Residues 616 to 639 (KRGLYRTLSMFRYKSKCYVGLVWC) form the ITAM domain. 2 positions are modified to phosphotyrosine: tyrosine 620 and tyrosine 633. A YxxL motif is present at residues 620–623 (YRTL). Residues 633–653 (YVGLVWCILLTMELIVWAASA) form a helical membrane-spanning segment. Topologically, residues 654-1109 (ETINLEPGWT…EWLLGILSGN (456 aa)) are lumenal. 8 disulfide bridges follow: cysteine 740/cysteine 775, cysteine 744/cysteine 782, cysteine 756/cysteine 889, cysteine 770/cysteine 900, cysteine 785/cysteine 908, cysteine 811/cysteine 820, cysteine 828/cysteine 837, and cysteine 868/cysteine 872. Positions 762–782 (FEFETGWGCNPPDCPGVGTGC) are fusion loop. An N-linked (GlcNAc...) asparagine; by host glycan is attached at asparagine 932. 5 disulfide bridges follow: cysteine 974–cysteine 1004, cysteine 997–cysteine 1049, cysteine 1014–cysteine 1019, cysteine 1050–cysteine 1055, and cysteine 1089–cysteine 1093. Residues 1110 to 1130 (WMVVAVLIALFIFSLLLFSLC) traverse the membrane as a helical segment. Residues 1126-1141 (LFSLCCPRRQNYKKNK) are binding to the ribonucleoprotein. Topologically, residues 1131-1141 (CPRRQNYKKNK) are cytoplasmic.

Belongs to the hantavirus envelope glycoprotein family. As to quaternary structure, homodimer. Homotetramer; forms heterotetrameric Gn-Gc spikes in the pre-fusion conformation. Interacts (via C-terminus) with the nucleoprotein. Interacts with host TUFM; this interaction contributes to the virus-induced degradation of mitochondria by autophagy, which leads to degradation of host MAVS and inhibition of type I interferon (IFN) responses. Interacts with host MAP1LC3B; this interaction contributes to the virus-induced degradation of mitochondria by autophagy, which leads to degradation of host MAVS and inhibition of type I interferon (IFN) responses. Homodimer. Homotetramer; forms heterotetrameric Gn-Gc spikes in the pre-fusion conformation. Homotrimer; forms homotrimer in the post-fusion conformation at acidic pH. Interacts (via C-terminus) with the nucleoprotein. In terms of processing, envelope polyprotein precursor is quickly cleaved in vivo just after synthesis, presumably by host signal peptidase.

The protein resides in the virion membrane. The protein localises to the host cell surface. It is found in the host Golgi apparatus membrane. Its subcellular location is the host endoplasmic reticulum membrane. It localises to the host mitochondrion. Its function is as follows. Forms homotetramers with glycoprotein C at the surface of the virion. Attaches the virion to host cell receptors including integrin alpha5/ITGB1. This attachment induces virion internalization predominantly through clathrin-dependent endocytosis. Mediates the assembly and budding of infectious virus particles through its interaction with the nucleocapsid protein and the viral genome. May dysregulate normal immune and endothelial cell responses through an ITAM motif. Translocates to mitochondria, binds to host TUFM and recruits MAP1LC3B. These interactions induce mitochondrial autophagy and therefore destruction of host MAVS leading to inhibition of type I interferon (IFN) responses. Concomitant breakdown of glycoprotein N is apparently prevented by the nucleoprotein that may inhibit Gn-stimulated autophagosome-lysosome fusion. Interacts with the viral genomic RNA. Inhibits the host RIG-I/TBK1 pathway by disrupting the formation of TBK1-TRAF3 complexes and downstream signaling responses required for IFN-beta transcription. Functionally, forms homotetramers with glycoprotein N at the surface of the virion. Attaches the virion to host cell receptors including integrin ITGAV/ITGB3. This attachment induces virion internalization predominantly through clathrin-dependent endocytosis. Class II fusion protein that promotes fusion of viral membrane with host endosomal membrane after endocytosis of the virion. This Tula orthohantavirus (TULV) protein is Envelopment polyprotein (GP).